Here is a 210-residue protein sequence, read N- to C-terminus: uncharacterized protein (210 aa).

This is an uncharacterized protein from Mycobacterium bovis (strain ATCC BAA-935 / AF2122/97).